A 164-amino-acid polypeptide reads, in one-letter code: Protein-export protein SecB (164 aa).

It belongs to the SecB family. As to quaternary structure, homotetramer, a dimer of dimers. One homotetramer interacts with 1 SecA dimer.

Its subcellular location is the cytoplasm. Its function is as follows. One of the proteins required for the normal export of preproteins out of the cell cytoplasm. It is a molecular chaperone that binds to a subset of precursor proteins, maintaining them in a translocation-competent state. It also specifically binds to its receptor SecA. The sequence is that of Protein-export protein SecB from Janthinobacterium sp. (strain Marseille) (Minibacterium massiliensis).